The following is a 634-amino-acid chain: Acetylcholinesterase (634 aa).

The first 23 residues, 1–23, serve as a signal peptide directing secretion; sequence MKTSDILLLPTVLLTFLFHNCFA. Residues cysteine 91 and cysteine 118 are joined by a disulfide bond. 2 N-linked (GlcNAc...) asparagine glycosylation sites follow: asparagine 133 and asparagine 184. Residue serine 225 is the Acyl-ester intermediate of the active site. Cysteine 279 and cysteine 290 are joined by a disulfide. Asparagine 283 carries an N-linked (GlcNAc...) asparagine glycan. Glutamate 352 acts as the Charge relay system in catalysis. Asparagine 368 carries an N-linked (GlcNAc...) asparagine glycan. Residues cysteine 427 and cysteine 580 are joined by a disulfide bond. Histidine 495 functions as the Charge relay system in the catalytic mechanism. 2 N-linked (GlcNAc...) asparagine glycosylation sites follow: asparagine 512 and asparagine 592.

This sequence belongs to the type-B carboxylesterase/lipase family. Dimers and collagen-tailed forms, in which catalytic tetramers are associated with anchoring proteins that attach them to the basal lamina or to cell membranes. In the collagen-tailed forms, subunits are associated with a specific collagen, COLQ, which triggers the formation of isoform T tetramers from dimers.

The protein localises to the synapse. The protein resides in the secreted. It localises to the cell membrane. It carries out the reaction acetylcholine + H2O = choline + acetate + H(+). In terms of biological role, terminates signal transduction at the neuromuscular junction by rapid hydrolysis of the acetylcholine released into the synaptic cleft. The sequence is that of Acetylcholinesterase (ache) from Danio rerio (Zebrafish).